The following is a 172-amino-acid chain: Large ribosomal subunit protein uL10 (172 aa).

The protein belongs to the universal ribosomal protein uL10 family. As to quaternary structure, part of the ribosomal stalk of the 50S ribosomal subunit. The N-terminus interacts with L11 and the large rRNA to form the base of the stalk. The C-terminus forms an elongated spine to which L12 dimers bind in a sequential fashion forming a multimeric L10(L12)X complex.

Forms part of the ribosomal stalk, playing a central role in the interaction of the ribosome with GTP-bound translation factors. The sequence is that of Large ribosomal subunit protein uL10 from Rhizobium etli (strain ATCC 51251 / DSM 11541 / JCM 21823 / NBRC 15573 / CFN 42).